The primary structure comprises 48 residues: Large ribosomal subunit protein bL32c (48 aa).

Belongs to the bacterial ribosomal protein bL32 family.

It localises to the plastid. The protein resides in the chloroplast. This chain is Large ribosomal subunit protein bL32c (rpl32), found in Vicia faba (Broad bean).